A 327-amino-acid chain; its full sequence is F-box/LRR-repeat protein At3g58900 (327 aa).

The region spanning 1 to 47 (MDLFSSLPNELLYHILSFLSTKEAALTSVLSKRWRNLFAFVPYLEFD) is the F-box domain. LRR repeat units lie at residues 116–144 (DLFIDFRDLYSLPHEVGVSRTLVVLRVGS), 161–192 (KTLVLDSCWLCIGQFQILLLACPALEELDMTN), 199–230 (NVTVSSSILKELTIDLHGCCSVVNLKSLSFDA), 235–261 (YFYYCDSLAEDYPQVNLKNLVEAQINL), and 277–308 (EMLVADDVFPGLGNAWKLITGLRNVQQLYLSP).

The chain is F-box/LRR-repeat protein At3g58900 from Arabidopsis thaliana (Mouse-ear cress).